We begin with the raw amino-acid sequence, 70 residues long: Guanine nucleotide-binding protein subunit gamma-1 (70 aa).

Residue Cys67 is modified to Cysteine methyl ester. Cys67 carries S-geranylgeranyl cysteine lipidation. A propeptide spans 68–70 (TVL) (removed in mature form).

It belongs to the G protein gamma family. As to quaternary structure, g proteins are composed of 3 units, alpha, beta and gamma. In terms of tissue distribution, predominantly expressed in the central nervous system.

Its subcellular location is the cell membrane. Its function is as follows. Guanine nucleotide-binding proteins (G proteins) are involved as a modulator or transducer in various transmembrane signaling systems. The beta and gamma chains are required for the GTPase activity, for replacement of GDP by GTP, and for G protein-effector interaction. The protein is Guanine nucleotide-binding protein subunit gamma-1 (Ggamma1) of Drosophila melanogaster (Fruit fly).